The following is a 131-amino-acid chain: UPF0102 protein YraN (131 aa).

Over residues 1–19 (MATVPTRSGSPRQLTTKQT) the composition is skewed to polar residues. Residues 1 to 20 (MATVPTRSGSPRQLTTKQTG) are disordered.

Belongs to the UPF0102 family.

The sequence is that of UPF0102 protein YraN from Escherichia coli O157:H7.